A 306-amino-acid polypeptide reads, in one-letter code: Ornithine carbamoyltransferase (306 aa).

Carbamoyl phosphate is bound by residues 53–56 (STRT), Gln-80, Arg-104, and 131–134 (HPCQ). Residues Asn-162, Asp-220, and 224-225 (SM) each bind L-ornithine. Carbamoyl phosphate-binding positions include 260 to 261 (CL) and Arg-288.

It belongs to the aspartate/ornithine carbamoyltransferase superfamily. OTCase family.

Its subcellular location is the cytoplasm. The catalysed reaction is carbamoyl phosphate + L-ornithine = L-citrulline + phosphate + H(+). The protein operates within amino-acid biosynthesis; L-arginine biosynthesis; L-arginine from L-ornithine and carbamoyl phosphate: step 1/3. Functionally, reversibly catalyzes the transfer of the carbamoyl group from carbamoyl phosphate (CP) to the N(epsilon) atom of ornithine (ORN) to produce L-citrulline. The protein is Ornithine carbamoyltransferase of Methylobacillus flagellatus (strain ATCC 51484 / DSM 6875 / VKM B-1610 / KT).